An 89-amino-acid chain; its full sequence is Cell division topological specificity factor (89 aa).

The protein belongs to the MinE family.

In terms of biological role, prevents the cell division inhibition by proteins MinC and MinD at internal division sites while permitting inhibition at polar sites. This ensures cell division at the proper site by restricting the formation of a division septum at the midpoint of the long axis of the cell. The chain is Cell division topological specificity factor from Yersinia pestis bv. Antiqua (strain Angola).